Here is a 1406-residue protein sequence, read N- to C-terminus: MDMVENADSLQAQERKDILMKYDKGHRAGLPEDKGPEPVGINSSIDRFGILHETELPPVTAREAKKIRREMTRTSKWMEMLGEWETYKHSSKLIDRVYKGIPMNIRGPVWSVLLNIQEIKLKNPGRYQIMKERGKRSSEHIHHIDLDVRTTLRNHVFFRDRYGAKQRELFYILLAYSEYNPEVGYCRDLSHITALFLLYLPEEDAFWALVQLLASERHSLPGFHSPNGGTVQGLQDQQEHVVPKSQPKTMWHQDKEGLCGQCASLGCLLRNLIDGISLGLTLRLWDVYLVEGEQVLMPITSIALKVQQKRLMKTSRCGLWARLRNQFFDTWAMNDDTVLKHLRASTKKLTRKQGDLPPPAKREQGSLAPRPVPASRGGKTLCKGYRQAPPGPPAQFQRPICSASPPWASRFSTPCPGGAVREDTYPVGTQGVPSLALAQGGPQGSWRFLEWKSMPRLPTDLDIGGPWFPHYDFEWSCWVRAISQEDQLATCWQAEHCGEVHNKDMSWPEEMSFTANSSKIDRQKVPTEKGATGLSNLGNTCFMNSSIQCVSNTQPLTQYFISGRHLYELNRTNPIGMKGHMAKCYGDLVQELWSGTQKSVAPLKLRRTIAKYAPKFDGFQQQDSQELLAFLLDGLHEDLNRVHEKPYVELKDSDGRPDWEVAAEAWDNHLRRNRSIIVDLFHGQLRSQVKCKTCGHISVRFDPFNFLSLPLPMDSYMDLEITVIKLDGTTPVRYGLRLNMDEKYTGLKKQLRDLCGLNSEQILLAEVHDSNIKNFPQDNQKVQLSVSGFLCAFEIPVPSSPISASSPTQIDFSSSPSTNGMFTLTTNGDLPKPIFIPNGMPNTVVPCGTEKNFTNGMVNGHMPSLPDSPFTGYIIAVHRKMMRTELYFLSPQENRPSLFGMPLIVPCTVHTRKKDLYDAVWIQVSWLARPLPPQEASIHAQDRDNCMGYQYPFTLRVVQKDGNSCAWCPQYRFCRGCKIDCGEDRAFIGNAYIAVDWHPTALHLRYQTSQERVVDKHESVEQSRRAQAEPINLDSCLRAFTSEEELGESEMYYCSKCKTHCLATKKLDLWRLPPFLIIHLKRFQFVNDQWIKSQKIVRFLRESFDPSAFLVPRDPALCQHKPLTPQGDELSKPRILAREVKKVDAQSSAGKEDMLLSKSPSSLSANISSSPKGSPSSSRKSGTSCPSSKNSSPNSSPRTLGRSKGRLRLPQIGSKNKPSSSKKNLDASKENGAGQICELADALSRGHMRGGSQPELVTPQDHEVALANGFLYEHEACGNGCGDGYSNGQLGNHSEEDSTDDQREDTHIKPIYNLYAISCHSGILSGGHYITYAKNPNCKWYCYNDSSCEELHPDEIDTDSAYILFYEQQGIDYAQFLPKIDGKKMADTSSTDEDSESDYEKYSMLQ.

Residues 100 to 292 (GIPMNIRGPV…RLWDVYLVEG (193 aa)) enclose the Rab-GAP TBC domain. The disordered stretch occupies residues 348-380 (KLTRKQGDLPPPAKREQGSLAPRPVPASRGGKT). Residues 532–1369 (TGLSNLGNTC…SAYILFYEQQ (838 aa)) enclose the USP domain. Cys-541 acts as the Nucleophile in catalysis. A disordered region spans residues 1120-1231 (HKPLTPQGDE…KKNLDASKEN (112 aa)). Over residues 1129–1155 (ELSKPRILAREVKKVDAQSSAGKEDML) the composition is skewed to basic and acidic residues. The segment covering 1156–1197 (LSKSPSSLSANISSSPKGSPSSSRKSGTSCPSSKNSSPNSSP) has biased composition (low complexity). Residue His-1328 is the Proton acceptor of the active site. The interval 1384–1406 (KMADTSSTDEDSESDYEKYSMLQ) is disordered.

Belongs to the peptidase C19 family. Interacts with RAC1 and CDC42. Interacts (via Rab-GAP TBC domain) with ARF6. Interacts with calmodulin (CALM1, CALM2 and/or CALM3); the interaction is calcium-dependent. In terms of processing, monubiquitinated; ubiquitination is calmodulin and calcium dependent. As to expression, testis specific. Expressed in various cancer cell lines.

Its subcellular location is the cell membrane. It localises to the cytoplasm. The protein resides in the endosome. The catalysed reaction is Thiol-dependent hydrolysis of ester, thioester, amide, peptide and isopeptide bonds formed by the C-terminal Gly of ubiquitin (a 76-residue protein attached to proteins as an intracellular targeting signal).. Functionally, deubiquitinase with an ATP-independent isopeptidase activity, cleaving at the C-terminus of the ubiquitin moiety. Catalyzes its own deubiquitination. In vitro, isoform 2, but not isoform 3, shows deubiquitinating activity. Promotes plasma membrane localization of ARF6 and selectively regulates ARF6-dependent endocytic protein trafficking. Is able to initiate tumorigenesis by inducing the production of matrix metalloproteinases following NF-kappa-B activation. May act as a GTPase-activating protein for RAB3A. The sequence is that of Ubiquitin carboxyl-terminal hydrolase 6 (USP6) from Homo sapiens (Human).